The chain runs to 246 residues: MHTLFISDLHLSPKHPDITASFIQFMREEAIKADALYVLGDLFDFWIGDDDPTTFAEQIKSEFRQLTQQGVPCYFTKGNRDFLVGKRFAQQTGVQLLPDEAVIDLYGQKAVVLHGDTLCTQDTRYLEFRAKVHQPWLQRLFGLLPFALKQKLVRKIQSDIRDDKQHKSMMIMDVTPSEVIAVMHRYNVDLMIHGHTHRPAIHSIQTDDQTLKTRIVLGDWYSQSSILVYSKLTGYSLLSRPLINIE.

Residues Asp-8, His-10, Asp-41, Asn-79, and His-114 each coordinate Mn(2+). 79–80 (NR) serves as a coordination point for substrate. Residues Asp-122, Lys-164, Lys-167, and His-195 each contribute to the substrate site. Residues His-195 and His-197 each coordinate Mn(2+).

This sequence belongs to the LpxH family. Requires Mn(2+) as cofactor.

Its subcellular location is the cell inner membrane. It catalyses the reaction UDP-2-N,3-O-bis[(3R)-3-hydroxytetradecanoyl]-alpha-D-glucosamine + H2O = 2-N,3-O-bis[(3R)-3-hydroxytetradecanoyl]-alpha-D-glucosaminyl 1-phosphate + UMP + 2 H(+). It participates in glycolipid biosynthesis; lipid IV(A) biosynthesis; lipid IV(A) from (3R)-3-hydroxytetradecanoyl-[acyl-carrier-protein] and UDP-N-acetyl-alpha-D-glucosamine: step 4/6. In terms of biological role, hydrolyzes the pyrophosphate bond of UDP-2,3-diacylglucosamine to yield 2,3-diacylglucosamine 1-phosphate (lipid X) and UMP by catalyzing the attack of water at the alpha-P atom. Involved in the biosynthesis of lipid A, a phosphorylated glycolipid that anchors the lipopolysaccharide to the outer membrane of the cell. The polypeptide is UDP-2,3-diacylglucosamine hydrolase (Vibrio cholerae serotype O1 (strain ATCC 39541 / Classical Ogawa 395 / O395)).